We begin with the raw amino-acid sequence, 378 residues long: Erythronate-4-phosphate dehydrogenase (378 aa).

2 residues coordinate substrate: Ser45 and Thr66. Residues Asp146 and Thr175 each coordinate NAD(+). Arg208 is a catalytic residue. Asp232 is an NAD(+) binding site. Residue Glu237 is part of the active site. Residue His254 is the Proton donor of the active site. Gly257 contributes to the NAD(+) binding site. Substrate is bound at residue Tyr258.

It belongs to the D-isomer specific 2-hydroxyacid dehydrogenase family. PdxB subfamily. As to quaternary structure, homodimer.

The protein localises to the cytoplasm. It carries out the reaction 4-phospho-D-erythronate + NAD(+) = (R)-3-hydroxy-2-oxo-4-phosphooxybutanoate + NADH + H(+). The protein operates within cofactor biosynthesis; pyridoxine 5'-phosphate biosynthesis; pyridoxine 5'-phosphate from D-erythrose 4-phosphate: step 2/5. Functionally, catalyzes the oxidation of erythronate-4-phosphate to 3-hydroxy-2-oxo-4-phosphonooxybutanoate. This is Erythronate-4-phosphate dehydrogenase from Escherichia coli (strain ATCC 8739 / DSM 1576 / NBRC 3972 / NCIMB 8545 / WDCM 00012 / Crooks).